A 335-amino-acid polypeptide reads, in one-letter code: Glucan endo-1,3-beta-glucosidase, acidic isoform (335 aa).

Positions 1-29 are cleaved as a signal peptide; sequence MARQGVIASMHALALLLGAFAAIPTGVQS. Glu122 acts as the Proton donor in catalysis. Residue Glu259 is the Nucleophile of the active site.

This sequence belongs to the glycosyl hydrolase 17 family. In terms of tissue distribution, accumulates in aleurone layers. Much lower levels are found in the embryo, and none in starchy endosperm.

It is found in the secreted. The protein localises to the extracellular space. It carries out the reaction Hydrolysis of (1-&gt;3)-beta-D-glucosidic linkages in (1-&gt;3)-beta-D-glucans.. In terms of biological role, is thought to be an important plant defense-related product against fungal pathogens. This is Glucan endo-1,3-beta-glucosidase, acidic isoform from Zea mays (Maize).